Consider the following 573-residue polypeptide: CTP synthase (573 aa).

The amidoligase domain stretch occupies residues 1–281; it reads MGQTRIQART…DAYVVRRLGL (281 aa). Serine 23 is a binding site for CTP. Serine 23 contributes to the UTP binding site. Residues 24 to 29 and aspartate 81 contribute to the ATP site; that span reads SLGKGL. Residues aspartate 81 and glutamate 155 each coordinate Mg(2+). Residues 162-164, 202-207, and lysine 238 each bind CTP; these read DIE and KTKPTQ. Residues 202–207 and lysine 238 contribute to the UTP site; that span reads KTKPTQ. One can recognise a Glutamine amidotransferase type-1 domain in the interval 306–554; sequence EVALVGKYVD…IAAALKYKLA (249 aa). An L-glutamine-binding site is contributed by glycine 369. Catalysis depends on cysteine 396, which acts as the Nucleophile; for glutamine hydrolysis. L-glutamine contacts are provided by residues 397–400, glutamate 419, and arginine 480; that span reads LGLQ. Active-site residues include histidine 527 and glutamate 529.

This sequence belongs to the CTP synthase family. As to quaternary structure, homotetramer.

The enzyme catalyses UTP + L-glutamine + ATP + H2O = CTP + L-glutamate + ADP + phosphate + 2 H(+). The catalysed reaction is L-glutamine + H2O = L-glutamate + NH4(+). It carries out the reaction UTP + NH4(+) + ATP = CTP + ADP + phosphate + 2 H(+). It functions in the pathway pyrimidine metabolism; CTP biosynthesis via de novo pathway; CTP from UDP: step 2/2. Allosterically activated by GTP, when glutamine is the substrate; GTP has no effect on the reaction when ammonia is the substrate. The allosteric effector GTP functions by stabilizing the protein conformation that binds the tetrahedral intermediate(s) formed during glutamine hydrolysis. Inhibited by the product CTP, via allosteric rather than competitive inhibition. Its function is as follows. Catalyzes the ATP-dependent amination of UTP to CTP with either L-glutamine or ammonia as the source of nitrogen. Regulates intracellular CTP levels through interactions with the four ribonucleotide triphosphates. The protein is CTP synthase of Nocardia farcinica (strain IFM 10152).